A 272-amino-acid polypeptide reads, in one-letter code: Shikimate dehydrogenase (NADP(+)) (272 aa).

Shikimate-binding positions include 14–16 and threonine 61; that span reads SKS. The Proton acceptor role is filled by lysine 65. Glutamate 77 lines the NADP(+) pocket. Shikimate contacts are provided by asparagine 86 and aspartate 102. NADP(+)-binding positions include 126 to 130, 149 to 154, and methionine 213; these read GAGGA and NRTVSR. Tyrosine 215 contributes to the shikimate binding site. Glycine 237 is an NADP(+) binding site.

This sequence belongs to the shikimate dehydrogenase family. Homodimer.

It catalyses the reaction shikimate + NADP(+) = 3-dehydroshikimate + NADPH + H(+). The protein operates within metabolic intermediate biosynthesis; chorismate biosynthesis; chorismate from D-erythrose 4-phosphate and phosphoenolpyruvate: step 4/7. Involved in the biosynthesis of the chorismate, which leads to the biosynthesis of aromatic amino acids. Catalyzes the reversible NADPH linked reduction of 3-dehydroshikimate (DHSA) to yield shikimate (SA). This Shigella flexneri protein is Shikimate dehydrogenase (NADP(+)).